A 279-amino-acid chain; its full sequence is S-formylglutathione hydrolase (279 aa).

Residues serine 150, aspartate 226, and histidine 258 each act as charge relay system in the active site.

This sequence belongs to the esterase D family.

The catalysed reaction is S-formylglutathione + H2O = formate + glutathione + H(+). In terms of biological role, serine hydrolase involved in the detoxification of formaldehyde. Hydrolyzes S-formylglutathione to glutathione and formate. This chain is S-formylglutathione hydrolase (fghA), found in Paracoccus denitrificans (strain Pd 1222).